A 313-amino-acid chain; its full sequence is Probable GTP 3',8-cyclase (313 aa).

In terms of domain architecture, Radical SAM core spans 4 to 224 (VYGRELEDLR…EIRNKHKRPR (221 aa)). Arg13 serves as a coordination point for GTP. Cys20, Cys24, and Cys27 together coordinate [4Fe-4S] cluster. Lys60 is a GTP binding site. Residue Gly64 coordinates S-adenosyl-L-methionine. Thr90 contributes to the GTP binding site. Ser114 serves as a coordination point for S-adenosyl-L-methionine. GTP is bound at residue Lys151. Residues Cys244 and Cys247 each coordinate [4Fe-4S] cluster. Residue 249 to 251 (RIR) coordinates GTP. Cys261 is a [4Fe-4S] cluster binding site.

This sequence belongs to the radical SAM superfamily. MoaA family. It depends on [4Fe-4S] cluster as a cofactor.

The enzyme catalyses GTP + AH2 + S-adenosyl-L-methionine = (8S)-3',8-cyclo-7,8-dihydroguanosine 5'-triphosphate + 5'-deoxyadenosine + L-methionine + A + H(+). It participates in cofactor biosynthesis; molybdopterin biosynthesis. Catalyzes the cyclization of GTP to (8S)-3',8-cyclo-7,8-dihydroguanosine 5'-triphosphate. In Sulfolobus acidocaldarius (strain ATCC 33909 / DSM 639 / JCM 8929 / NBRC 15157 / NCIMB 11770), this protein is Probable GTP 3',8-cyclase.